A 141-amino-acid polypeptide reads, in one-letter code: Vesicle-associated membrane protein 4 (141 aa).

A disordered region spans residues 1-51 (MPPKFKRHLNDDDVTGSVKSERRNLLEDDSDEEEDFFLRGPSGPRFGPRND). Topologically, residues 1–115 (MPPKFKRHLN…RRQMWWRGCK (115 aa)) are cytoplasmic. Phosphoserine occurs at positions 17 and 30. Positions 52-112 (KIKHVQNQVD…KQLRRQMWWR (61 aa)) constitute a v-SNARE coiled-coil homology domain. Residues 116–136 (IKAIMALVAVILLLVIIILIV) traverse the membrane as a helical; Anchor for type IV membrane protein segment. Over 137–141 (VKYRT) the chain is Vesicular.

It belongs to the synaptobrevin family. As to quaternary structure, identified in a complex containing STX6, STX12, VAMP4 and VTI1A. Interacts with BAIAP3; this interaction is increased in the presence of calcium.

The protein localises to the golgi apparatus. Its subcellular location is the trans-Golgi network membrane. Its function is as follows. Involved in the pathway that functions to remove an inhibitor (probably synaptotagmin-4) of calcium-triggered exocytosis during the maturation of secretory granules. May be a marker for this sorting pathway that is critical for remodeling the secretory response of granule. This chain is Vesicle-associated membrane protein 4 (VAMP4), found in Bos taurus (Bovine).